We begin with the raw amino-acid sequence, 159 residues long: Globin C, coelomic (159 aa).

At Gly-2 the chain carries N-acetylglycine. One can recognise a Globin domain in the interval 12–158 (DLTLAQKKIV…VQAVLLVKHG (147 aa)). Heme b is bound by residues His-74 and His-105.

The protein belongs to the globin family. Monomer.

This Molpadia arenicola (Sea cucumber) protein is Globin C, coelomic.